A 303-amino-acid chain; its full sequence is HTH-type transcriptional regulator YjiE (303 aa).

The 58-residue stretch at 11–68 (IETKWLYDFLTLEKCRNFSQAAVSRNVSQPAFSRRIRALEQAIGVELFNRQVTPLQLS) folds into the HTH lysR-type domain. A DNA-binding region (H-T-H motif) is located at residues 28 to 47 (FSQAAVSRNVSQPAFSRRIR).

Belongs to the LysR transcriptional regulatory family. In terms of assembly, forms dimers, tetramers and possibly dodecameric complexes; oligomerization may be governed by cellular concentrations. DNA-binding seems to decrease oligomerization.

Its function is as follows. Protects cells from HOCl (hypochlorite) stress but not peroxide or diamide stress. Decreases the intracellular load of reactive oxygen species by up-regulating genes involved in methionine and cysteine biosynthesis and down-regulating Fur-regulated genes involved in iron acquisition. Has also been suggested to down-regulate expression of the flagellar regulon, decreasing motility, but this activity was not confirmed in a second study. The protein is HTH-type transcriptional regulator YjiE (yjiE) of Escherichia coli (strain K12).